A 459-amino-acid chain; its full sequence is Bifunctional protein GlmU (459 aa).

The segment at 1 to 230 (MSNRFAVILA…FDETLGVNDR (230 aa)) is pyrophosphorylase. UDP-N-acetyl-alpha-D-glucosamine-binding positions include 9 to 12 (LAAG), lysine 23, glutamine 73, and 78 to 79 (GT). Aspartate 103 contributes to the Mg(2+) binding site. Residues glycine 140, glutamate 155, asparagine 170, and asparagine 228 each coordinate UDP-N-acetyl-alpha-D-glucosamine. Residue asparagine 228 coordinates Mg(2+). The linker stretch occupies residues 231-251 (VALSQAEIIMKNRINRKNMVN). The tract at residues 252 to 459 (GVTIIDPSNT…VDQLLNKKKS (208 aa)) is N-acetyltransferase. 2 residues coordinate UDP-N-acetyl-alpha-D-glucosamine: arginine 333 and lysine 351. The Proton acceptor role is filled by histidine 363. UDP-N-acetyl-alpha-D-glucosamine is bound by residues tyrosine 366 and asparagine 377. Acetyl-CoA is bound by residues 386 to 387 (NY), alanine 423, and arginine 440.

It in the N-terminal section; belongs to the N-acetylglucosamine-1-phosphate uridyltransferase family. This sequence in the C-terminal section; belongs to the transferase hexapeptide repeat family. Homotrimer. Mg(2+) is required as a cofactor.

It localises to the cytoplasm. It carries out the reaction alpha-D-glucosamine 1-phosphate + acetyl-CoA = N-acetyl-alpha-D-glucosamine 1-phosphate + CoA + H(+). The catalysed reaction is N-acetyl-alpha-D-glucosamine 1-phosphate + UTP + H(+) = UDP-N-acetyl-alpha-D-glucosamine + diphosphate. The protein operates within nucleotide-sugar biosynthesis; UDP-N-acetyl-alpha-D-glucosamine biosynthesis; N-acetyl-alpha-D-glucosamine 1-phosphate from alpha-D-glucosamine 6-phosphate (route II): step 2/2. Its pathway is nucleotide-sugar biosynthesis; UDP-N-acetyl-alpha-D-glucosamine biosynthesis; UDP-N-acetyl-alpha-D-glucosamine from N-acetyl-alpha-D-glucosamine 1-phosphate: step 1/1. It functions in the pathway bacterial outer membrane biogenesis; LPS lipid A biosynthesis. Functionally, catalyzes the last two sequential reactions in the de novo biosynthetic pathway for UDP-N-acetylglucosamine (UDP-GlcNAc). The C-terminal domain catalyzes the transfer of acetyl group from acetyl coenzyme A to glucosamine-1-phosphate (GlcN-1-P) to produce N-acetylglucosamine-1-phosphate (GlcNAc-1-P), which is converted into UDP-GlcNAc by the transfer of uridine 5-monophosphate (from uridine 5-triphosphate), a reaction catalyzed by the N-terminal domain. The polypeptide is Bifunctional protein GlmU (Bacillus cereus (strain ZK / E33L)).